Consider the following 73-residue polypeptide: Structural DNA-binding protein p10 (73 aa).

Positions 1-35 (MPTKAGTKSTAHKKTTTKGPSKSPKGKTHATALHQ) are disordered.

This sequence belongs to the asfivirus P10 family.

It is found in the virion. Its function is as follows. May play a role in genome packaging through direct interaction with viral DNA. Binds to ssDNA and dsDNA with the same apparent affinity in vitro. The polypeptide is Structural DNA-binding protein p10 (African swine fever virus (isolate Tick/Malawi/Lil 20-1/1983) (ASFV)).